Reading from the N-terminus, the 248-residue chain is Trypsin I-P38 (248 aa).

A signal peptide spans 1–15 (MKFLVLVAFLGVAVA). A propeptide spans 16–25 (FPISDEDDDK) (activation peptide). The region spanning 26–246 (IVGGYSCARS…YVSWIKTTMS (221 aa)) is the Peptidase S1 domain. Intrachain disulfides connect Cys-32–Cys-162, Cys-50–Cys-66, Cys-134–Cys-235, Cys-141–Cys-208, Cys-173–Cys-187, and Cys-198–Cys-222. The active-site Charge relay system is His-65. Ca(2+) is bound by residues Glu-77, Asn-79, and Glu-87. The active-site Charge relay system is the Asp-109. The active-site Charge relay system is Ser-202.

It belongs to the peptidase S1 family. Ca(2+) serves as cofactor. As to expression, high levels are seen in the pancreas while lower levels are found in the liver, spleen and thymus.

The protein localises to the secreted. The protein resides in the extracellular space. The catalysed reaction is Preferential cleavage: Arg-|-Xaa, Lys-|-Xaa.. This Gallus gallus (Chicken) protein is Trypsin I-P38.